A 520-amino-acid chain; its full sequence is Endosomal/lysosomal proton channel TMEM175 (520 aa).

The tract at residues 1 to 27 (MGENDESEIIEHHDDEEMEKRRPPRTH) is disordered. Residues 1-49 (MGENDESEIIEHHDDEEMEKRRPPRTHAQSFLESVASSVKEGHSSTQSS) are Cytoplasmic-facing. Basic and acidic residues predominate over residues 9–21 (IIEHHDDEEMEKR). A helical membrane pass occupies residues 50-72 (HRLLAYSDALISIIATVMILPVA). Residues 51-57 (RLLAYSD) carry the RxxxFSD motif 1 motif. Residues 73 to 93 (HTKIQEDEELKQSIQALLTTK) lie on the Lumenal side of the membrane. The short helix H1-1 stretch occupies residues 74–79 (TKIQED). The tract at residues 81–87 (ELKQSIQ) is short helix H2-1. The helical transmembrane segment at 94–116 (IAVYLMTFLIVTVAWAAHIRLFQ) threads the bilayer. The Cytoplasmic portion of the chain corresponds to 117–122 (VIERID). A helical transmembrane segment spans residues 123-144 (DTLALLNLACMMLITFLPYTFS). The Lumenal portion of the chain corresponds to 145–154 (LMATFPNNIL). The chain crosses the membrane as a helical span at residues 155 to 176 (GILLFCACVMVIGLIQALIVLY). The Cytoplasmic segment spans residues 177 to 200 (GFSHPFLLNDQIQMSENQAYYKQH). Transmembrane regions (helical) follow at residues 201-221 (ILKVIMRVPIMCLFASIFSFI) and 222-242 (FFQLSYVLLAIVIFLPYISQC). The Cytoplasmic segment spans residues 243–274 (LKWIRSKAIGGQTDESPDSMPFYTYHPSEPLS). A helical membrane pass occupies residues 275 to 299 (KERVEAFSDGVFAIVATLLILDICE). The short motif at 277–283 (RVEAFSD) is the RxxxFSD motif 2 element. The Lumenal segment spans residues 300-326 (GNVPDPSVVKKKFDNSLIAALQEYGPE). The short helix H1-2 stretch occupies residues 305–313 (PSVVKKKFD). The segment at 315–321 (SLIAALQ) is short helix H2-2. Residues 327–349 (YLAYFGSFVTVGLLWFVHHSLFL) form a helical membrane-spanning segment. At 350 to 355 (HVTKAT) the chain is on the cytoplasmic side. Residues 356–377 (RLMGLFNTFSLAFVGGLPLAYQ) traverse the membrane as a helical segment. Over 378–392 (LTHESPRGSRNELEA) the chain is Lumenal. Residues 393–413 (VQISCVIIFFASLFQLAIWVT) form a helical membrane-spanning segment. Residues 414-433 (ALFTERETLHPYVRYGGREH) lie on the Cytoplasmic side of the membrane. Residues 434 to 457 (TFMLAKLSLYPCVALGTFFITCIL) form a helical membrane-spanning segment. The Lumenal portion of the chain corresponds to 458-459 (SR). A helical membrane pass occupies residues 460–486 (FSAPIFHMMEICIPFAFLLLRLLVRVA). Over 487 to 520 (LALLRWLFCSARNDLERIPVEEEESRLPINDIVT) the chain is Cytoplasmic.

Belongs to the TMEM175 family. As to quaternary structure, homodimer.

The protein resides in the endosome membrane. Its subcellular location is the lysosome membrane. The enzyme catalyses H(+)(in) = H(+)(out). It catalyses the reaction K(+)(in) = K(+)(out). With respect to regulation, active at low pH (under pH 4.6): proton channel activity is activated by luminal side protons. Polyunsaturated fatty acids, such as arachidonic acid, also activate the channel activity. Functionally, proton-activated proton channel that catalyzes proton efflux from endosomes and lysosomes to maintain a steady-state pH. Activated at low pH (under pH 4.6) by luminal side protons: selectively mediates lysosomal proton release from lysosomes, eliciting a proton leak that balances V-ATPase activity to maintain pH homeostasis. Regulation of lumenal pH stability is required for autophagosome-lysosome fusion. Also acts as a potassium channel at higher pH, regulating potassium conductance in endosomes and lysosomes. The polypeptide is Endosomal/lysosomal proton channel TMEM175 (Danio rerio (Zebrafish)).